The sequence spans 473 residues: MTRGRVIQVMGPVVDVKFENGHLPAIYNALKIQHKARNENEVDIDLTLEVALHLGDDTVRTIAMASTDGLIRGMEVIDTGAPISVPVGEVTLGRVFNVLGEPIDLEGDIPADARRDPIHRPAPKFEELATEVEILETGIKVVDLLAPYIKGGKIGLFGGAGVGKTVLIQELIHNIAQEHGGISVFAGVGERTREGNDLYHEMKDSGVISKTAMVFGQMNEPPGARMRVALTGLTMAEYFRDEQGQDVLLFIDNIFRFTQAGSEVSALLGRMPSAVGYQPTLATEMGQLQERITSTAKGSITSIQAIYVPADDYTDPAPATTFSHLDATTNLERKLAEMGIYPAVDPLASTSRALAPEIVGEEHYQVARKVQQTLQRYKELQDIIAILGMDELSDEDKLVVHRARRIQFFLSQNFHVAEQFTGQPGSYVPVKETVRGFKEILEGKYDHLPEDAFRLVGRIEEVVEKAKAMGVEV.

158-165 (GGAGVGKT) provides a ligand contact to ATP.

Belongs to the ATPase alpha/beta chains family. As to quaternary structure, F-type ATPases have 2 components, CF(1) - the catalytic core - and CF(0) - the membrane proton channel. CF(1) has five subunits: alpha(3), beta(3), gamma(1), delta(1), epsilon(1). CF(0) has three main subunits: a(1), b(2) and c(9-12). The alpha and beta chains form an alternating ring which encloses part of the gamma chain. CF(1) is attached to CF(0) by a central stalk formed by the gamma and epsilon chains, while a peripheral stalk is formed by the delta and b chains.

The protein localises to the cell membrane. It catalyses the reaction ATP + H2O + 4 H(+)(in) = ADP + phosphate + 5 H(+)(out). Functionally, produces ATP from ADP in the presence of a proton gradient across the membrane. The catalytic sites are hosted primarily by the beta subunits. The chain is ATP synthase subunit beta from Geobacillus kaustophilus (strain HTA426).